The following is a 199-amino-acid chain: MEQQEIIHISISEAAQAHFRCLLEQQEPNTHIRIFVVNPGTPSAECGVSYCPSNAVEETDTEFKFTGFSAFVDELSLPFLADAEIDYVTDQMGAQLTLKAPNSKMRKIADDAPFIERLDYVIQTQVNPQLASHGGQVTLIEVTEDKYAILQFGGGCNGCSMVDVTLKEGIEKQLLATFPTELKGVKDVTEHQRGEHSYY.

Residues Cys-156 and Cys-159 each coordinate [4Fe-4S] cluster.

This sequence belongs to the NfuA family. As to quaternary structure, homodimer. [4Fe-4S] cluster is required as a cofactor.

Its function is as follows. Involved in iron-sulfur cluster biogenesis. Binds a 4Fe-4S cluster, can transfer this cluster to apoproteins, and thereby intervenes in the maturation of Fe/S proteins. Could also act as a scaffold/chaperone for damaged Fe/S proteins. This is Fe/S biogenesis protein NfuA from Haemophilus ducreyi (strain 35000HP / ATCC 700724).